Consider the following 181-residue polypeptide: Ribonuclease HII (181 aa).

Residues 1 to 181 (MICGIDEVGR…NLHRRSFKFI (181 aa)) form the RNase H type-2 domain. A divalent metal cation-binding residues include Asp6, Glu7, and Asp98.

This sequence belongs to the RNase HII family. Requires Mn(2+) as cofactor. It depends on Mg(2+) as a cofactor.

Its subcellular location is the cytoplasm. The enzyme catalyses Endonucleolytic cleavage to 5'-phosphomonoester.. Endonuclease that specifically degrades the RNA of RNA-DNA hybrids. In Borrelia hermsii (strain HS1 / DAH), this protein is Ribonuclease HII.